The primary structure comprises 312 residues: 4-hydroxy-3-methylbut-2-enyl diphosphate reductase (312 aa).

Residue Cys15 participates in [4Fe-4S] cluster binding. 2 residues coordinate (2E)-4-hydroxy-3-methylbut-2-enyl diphosphate: His44 and His77. The dimethylallyl diphosphate site is built by His44 and His77. 2 residues coordinate isopentenyl diphosphate: His44 and His77. [4Fe-4S] cluster is bound at residue Cys99. Position 127 (His127) interacts with (2E)-4-hydroxy-3-methylbut-2-enyl diphosphate. His127 lines the dimethylallyl diphosphate pocket. His127 is an isopentenyl diphosphate binding site. The active-site Proton donor is Glu129. Residue Thr167 participates in (2E)-4-hydroxy-3-methylbut-2-enyl diphosphate binding. Cys197 contacts [4Fe-4S] cluster. Positions 225, 226, 227, and 269 each coordinate (2E)-4-hydroxy-3-methylbut-2-enyl diphosphate. The dimethylallyl diphosphate site is built by Ser225, Ser226, Asn227, and Ser269. Isopentenyl diphosphate is bound by residues Ser225, Ser226, Asn227, and Ser269.

This sequence belongs to the IspH family. Requires [4Fe-4S] cluster as cofactor.

The catalysed reaction is isopentenyl diphosphate + 2 oxidized [2Fe-2S]-[ferredoxin] + H2O = (2E)-4-hydroxy-3-methylbut-2-enyl diphosphate + 2 reduced [2Fe-2S]-[ferredoxin] + 2 H(+). It carries out the reaction dimethylallyl diphosphate + 2 oxidized [2Fe-2S]-[ferredoxin] + H2O = (2E)-4-hydroxy-3-methylbut-2-enyl diphosphate + 2 reduced [2Fe-2S]-[ferredoxin] + 2 H(+). Its pathway is isoprenoid biosynthesis; dimethylallyl diphosphate biosynthesis; dimethylallyl diphosphate from (2E)-4-hydroxy-3-methylbutenyl diphosphate: step 1/1. It participates in isoprenoid biosynthesis; isopentenyl diphosphate biosynthesis via DXP pathway; isopentenyl diphosphate from 1-deoxy-D-xylulose 5-phosphate: step 6/6. Functionally, catalyzes the conversion of 1-hydroxy-2-methyl-2-(E)-butenyl 4-diphosphate (HMBPP) into a mixture of isopentenyl diphosphate (IPP) and dimethylallyl diphosphate (DMAPP). Acts in the terminal step of the DOXP/MEP pathway for isoprenoid precursor biosynthesis. The chain is 4-hydroxy-3-methylbut-2-enyl diphosphate reductase from Azoarcus sp. (strain BH72).